Here is a 118-residue protein sequence, read N- to C-terminus: Large ribosomal subunit protein uL18 (118 aa).

It belongs to the universal ribosomal protein uL18 family. In terms of assembly, part of the 50S ribosomal subunit; part of the 5S rRNA/L5/L18/L25 subcomplex. Contacts the 5S and 23S rRNAs.

Its function is as follows. This is one of the proteins that bind and probably mediate the attachment of the 5S RNA into the large ribosomal subunit, where it forms part of the central protuberance. This Sulfurimonas denitrificans (strain ATCC 33889 / DSM 1251) (Thiomicrospira denitrificans (strain ATCC 33889 / DSM 1251)) protein is Large ribosomal subunit protein uL18.